Reading from the N-terminus, the 496-residue chain is Inosine-5'-monophosphate dehydrogenase (496 aa).

CBS domains are found at residues 96-152 (VIKD…TKKV) and 156-212 (MTKD…PQAA). NAD(+) contacts are provided by residues D247 and 299–301 (GIG). Positions 301 and 303 each coordinate K(+). S304 serves as a coordination point for IMP. C306 provides a ligand contact to K(+). The active-site Thioimidate intermediate is C306. IMP contacts are provided by residues 339–341 (DGG), 362–363 (GS), and 386–390 (YRGMG). Residue R405 is the Proton acceptor of the active site. Position 423 (E423) interacts with IMP. The K(+) site is built by E477, S478, and H479.

The protein belongs to the IMPDH/GMPR family. In terms of assembly, homotetramer. K(+) is required as a cofactor.

The enzyme catalyses IMP + NAD(+) + H2O = XMP + NADH + H(+). Its pathway is purine metabolism; XMP biosynthesis via de novo pathway; XMP from IMP: step 1/1. Mycophenolic acid (MPA) is a non-competitive inhibitor that prevents formation of the closed enzyme conformation by binding to the same site as the amobile flap. In contrast, mizoribine monophosphate (MZP) is a competitive inhibitor that induces the closed conformation. MPA is a potent inhibitor of mammalian IMPDHs but a poor inhibitor of the bacterial enzymes. MZP is a more potent inhibitor of bacterial IMPDH. In terms of biological role, catalyzes the conversion of inosine 5'-phosphate (IMP) to xanthosine 5'-phosphate (XMP), the first committed and rate-limiting step in the de novo synthesis of guanine nucleotides, and therefore plays an important role in the regulation of cell growth. The sequence is that of Inosine-5'-monophosphate dehydrogenase from Methanocaldococcus jannaschii (strain ATCC 43067 / DSM 2661 / JAL-1 / JCM 10045 / NBRC 100440) (Methanococcus jannaschii).